The sequence spans 145 residues: Superoxide dismutase [Mn/Fe] (145 aa).

The Fe(3+) site is built by His-10 and His-64. Residues His-10 and His-64 each coordinate Mn(2+).

The protein belongs to the iron/manganese superoxide dismutase family. The cofactor is Mn(2+). Fe(3+) serves as cofactor.

It carries out the reaction 2 superoxide + 2 H(+) = H2O2 + O2. Its function is as follows. Destroys superoxide anion radicals which are normally produced within the cells and which are toxic to biological systems. Catalyzes the dismutation of superoxide anion radicals into O2 and H2O2 by successive reduction and oxidation of the transition metal ion at the active site. In Streptococcus porcinus, this protein is Superoxide dismutase [Mn/Fe] (sodA).